Consider the following 310-residue polypeptide: Vomeronasal type-1 receptor 90 (310 aa).

Residues 1-20 lie on the Extracellular side of the membrane; it reads MRRISTLYGVVDKQAIFFSE. Residues 21–41 form a helical membrane-spanning segment; the sequence is VVIGISFNSILFLFHIFQFLL. Residues 42-46 lie on the Cytoplasmic side of the membrane; sequence ERRLR. Residues 47 to 67 traverse the membrane as a helical segment; sequence ITDLIISLLALIHLGMLTVMG. At 68–93 the chain is on the extracellular side; sequence FRAVDIFASQNVWNDIKCKSLAHLHR. Cysteine 85 and cysteine 172 are oxidised to a cystine. A helical transmembrane segment spans residues 94–114; sequence LLRGLSLCATCLLSIFQAITL. Over 115–135 the chain is Cytoplasmic; it reads SPRSSCLAKFKYKSTQHSLCS. The chain crosses the membrane as a helical span at residues 136–156; the sequence is LLVLWAFYMSCGTHYSFTIVA. The Extracellular portion of the chain corresponds to 157-183; it reads DYNFSSRSLIFVTESCIILPMDYITRH. The N-linked (GlcNAc...) asparagine glycan is linked to asparagine 159. A helical transmembrane segment spans residues 184–204; it reads LFFILGIFRDVSFIGLMALSS. Topologically, residues 205 to 238 are cytoplasmic; it reads GYMVALLCRHRKQAQHLHRTSLSPKASPEQRATR. A helical transmembrane segment spans residues 239 to 259; it reads TILLLMSFFVLMYCLDCTISA. The Extracellular portion of the chain corresponds to 260 to 271; it reads SRLMHNGEPIHH. A helical membrane pass occupies residues 272–292; sequence SIQMMVSNSYATLSPLLLIVT. The Cytoplasmic segment spans residues 293-310; it reads ENRISRFLKSLLGRTVDA.

Belongs to the G-protein coupled receptor 1 family. In terms of tissue distribution, expressed in 1-4% of neurons of the vomeronasal organ. Only one pheromone receptor gene may be expressed in a particular neuron. Not expressed in the main olfactory epithelium.

Its subcellular location is the cell membrane. Putative pheromone receptor implicated in the regulation of social as well as reproductive behavior. The protein is Vomeronasal type-1 receptor 90 (Vom1r90) of Rattus norvegicus (Rat).